Reading from the N-terminus, the 487-residue chain is Wax ester synthase/diacylglycerol acyltransferase 3 (487 aa).

Residues 1–193 lie on the Cytoplasmic side of the membrane; that stretch reads MYTMKKGKDM…KHASSNKKSW (193 aa). His151 functions as the Proton acceptor in the catalytic mechanism. The chain crosses the membrane as a helical span at residues 194–214; it reads WLVGRFWFMIRIIFTTVVELF. The Lumenal portion of the chain corresponds to 215 to 487; that stretch reads KYLLTLCFMR…MEKGVHKMEV (273 aa).

The protein in the N-terminal section; belongs to the long-chain O-acyltransferase family. Mostly expressed in flowers and siliques.

The protein localises to the cell membrane. The protein resides in the endoplasmic reticulum membrane. It catalyses the reaction an acyl-CoA + a 1,2-diacyl-sn-glycerol = a triacyl-sn-glycerol + CoA. The catalysed reaction is a long chain fatty alcohol + a fatty acyl-CoA = a wax ester + CoA. Its pathway is glycerolipid metabolism; triacylglycerol biosynthesis. It functions in the pathway lipid metabolism. Functionally, bifunctional wax ester synthase/diacylglycerol acyltransferase. Involved in cuticular wax biosynthesis. The sequence is that of Wax ester synthase/diacylglycerol acyltransferase 3 from Arabidopsis thaliana (Mouse-ear cress).